A 271-amino-acid polypeptide reads, in one-letter code: Bifunctional protein FolD (271 aa).

NADP(+) contacts are provided by residues Gly154–Ser156, Thr181, and Ile222.

The protein belongs to the tetrahydrofolate dehydrogenase/cyclohydrolase family. As to quaternary structure, homodimer.

It catalyses the reaction (6R)-5,10-methylene-5,6,7,8-tetrahydrofolate + NADP(+) = (6R)-5,10-methenyltetrahydrofolate + NADPH. It carries out the reaction (6R)-5,10-methenyltetrahydrofolate + H2O = (6R)-10-formyltetrahydrofolate + H(+). The protein operates within one-carbon metabolism; tetrahydrofolate interconversion. In terms of biological role, catalyzes the oxidation of 5,10-methylenetetrahydrofolate to 5,10-methenyltetrahydrofolate and then the hydrolysis of 5,10-methenyltetrahydrofolate to 10-formyltetrahydrofolate. The polypeptide is Bifunctional protein FolD (Thermosipho africanus (strain TCF52B)).